Consider the following 671-residue polypeptide: DNA ligase (671 aa).

Residues 32–36 (DVEYD), 81–82 (SL), and glutamate 113 contribute to the NAD(+) site. Lysine 115 acts as the N6-AMP-lysine intermediate in catalysis. NAD(+)-binding residues include arginine 136, glutamate 173, lysine 290, and lysine 314. Zn(2+) is bound by residues cysteine 408, cysteine 411, cysteine 426, and cysteine 432. The BRCT domain maps to 593-671 (EIDSPFAGKT…EAEMLRLLGS (79 aa)).

The protein belongs to the NAD-dependent DNA ligase family. LigA subfamily. Requires Mg(2+) as cofactor. Mn(2+) is required as a cofactor.

It carries out the reaction NAD(+) + (deoxyribonucleotide)n-3'-hydroxyl + 5'-phospho-(deoxyribonucleotide)m = (deoxyribonucleotide)n+m + AMP + beta-nicotinamide D-nucleotide.. DNA ligase that catalyzes the formation of phosphodiester linkages between 5'-phosphoryl and 3'-hydroxyl groups in double-stranded DNA using NAD as a coenzyme and as the energy source for the reaction. It is essential for DNA replication and repair of damaged DNA. This Escherichia coli O17:K52:H18 (strain UMN026 / ExPEC) protein is DNA ligase.